The chain runs to 580 residues: MLTDMDISSRASLKNITELGADLGLLPEEMMLFGHTKAKVELSVLQRLAGQRKGKLIIVTAVTPTPHGEGKTVTSIGLTQSLNAIGQKACACIRQPSMGPVFGVKGGAAGGGYAQVVPMQEMNLHLTGDIHAVSSAHNLGAAAIAARLFHEARLGKTEFEAQSGQAFLDIAPNEIRWHRVVDHNDRCLRQIHVGLGDNNGPEYGSSFDITAASELMAILALSHDLADMRARIGRLVLALNTQGQVITAEDLGVAGAMTAIMADAIKPTLMQTLNGSPCLIHSGPFANIAHGNSSIIADDIALRLADFVVTEGGFGSDMGFEKFCNIKVRQSGQAPAAAVLVTTLKALKANSGLATEVDSNAPNIHVPNINAPDQARLEAGFANLNWHINNVARYGIPVVVGINRFATDSDAELQWLMEAVNASAAFGCEISDAFSQGEAGAIALARTVVRAAETESQFKLLYPDEASLEAKLSTLAEVGYGASGVSLSIEAKQQAQQLTALGYGHLPLCMAKTPLSISHDPSLKGVPKDFVVPVRELVLHAGAGFITALVGNVMTMPGLGLKPGYLKIDIDAKGEIVGLG.

65–72 (TPHGEGKT) lines the ATP pocket.

It belongs to the formate--tetrahydrofolate ligase family.

It catalyses the reaction (6S)-5,6,7,8-tetrahydrofolate + formate + ATP = (6R)-10-formyltetrahydrofolate + ADP + phosphate. Its pathway is one-carbon metabolism; tetrahydrofolate interconversion. This chain is Formate--tetrahydrofolate ligase, found in Shewanella baltica (strain OS223).